Consider the following 283-residue polypeptide: 2-dehydro-3-deoxyphosphooctonate aldolase (283 aa).

This sequence belongs to the KdsA family.

It localises to the cytoplasm. The catalysed reaction is D-arabinose 5-phosphate + phosphoenolpyruvate + H2O = 3-deoxy-alpha-D-manno-2-octulosonate-8-phosphate + phosphate. It functions in the pathway carbohydrate biosynthesis; 3-deoxy-D-manno-octulosonate biosynthesis; 3-deoxy-D-manno-octulosonate from D-ribulose 5-phosphate: step 2/3. Its pathway is bacterial outer membrane biogenesis; lipopolysaccharide biosynthesis. In Shewanella frigidimarina (strain NCIMB 400), this protein is 2-dehydro-3-deoxyphosphooctonate aldolase.